Here is a 469-residue protein sequence, read N- to C-terminus: Solute carrier family 52, riboflavin transporter, member 3 (469 aa).

The Cytoplasmic segment spans residues 1–2 (MA). A helical transmembrane segment spans residues 3–23 (FLMHLLVCVFGMGSWVTINGL). The Extracellular segment spans residues 24-43 (WVELPLLVMELPEGWYLPSY). A helical transmembrane segment spans residues 44–64 (LTVVIQLANIGPLLVTLLHHF). The Cytoplasmic segment spans residues 65-71 (RPSCLSE). The chain crosses the membrane as a helical span at residues 72 to 92 (VPIIFTLLGVGTVTCIIFAFL). At 93–97 (WNMTS) the chain is on the extracellular side. The N-linked (GlcNAc...) asparagine glycan is linked to Asn-94. A helical transmembrane segment spans residues 98-118 (WVLDGHHSIAFLVLTFFLALV). Topologically, residues 119–137 (DCTSSVTFLPFMSRLPTYY) are cytoplasmic. Residues 138-158 (LTTFFVGEGLSGLLPALVALA) traverse the membrane as a helical segment. Residues 159-220 (QGSGLTTCVN…SRYLPAHFSP (62 aa)) are Extracellular-facing. Asn-168 carries N-linked (GlcNAc...) asparagine glycosylation. Residues 221–241 (LVFFLLLSIMMACCLVAFFVL) form a helical membrane-spanning segment. Over 242 to 292 (QRQPRCWEASVEDLLNDQVTLHSIRPREENDLGPAGTVDSSQGQGYLEEKA) the chain is Cytoplasmic. Ser-251 is modified (phosphoserine). A helical transmembrane segment spans residues 293 to 313 (APCCPAHLAFIYTLVAFVNAL). The Extracellular segment spans residues 314-335 (TNGMLPSVQTYSCLSYGPVAYH). The chain crosses the membrane as a helical span at residues 336-356 (LAATLSIVANPLASLVSMFLP). The Cytoplasmic portion of the chain corresponds to 357 to 359 (NRS). The chain crosses the membrane as a helical span at residues 360-380 (LLFLGVLSVLGTCFGGYNMAM). Residues 381–396 (AVMSPCPLLQGHWGGE) lie on the Extracellular side of the membrane. Cys-386 and Cys-463 are disulfide-bonded. A helical transmembrane segment spans residues 397-417 (VLIVASWVLFSGCLSYVKVML). Topologically, residues 418-427 (GVVLRDLSRS) are cytoplasmic. Residues 428–448 (ALLWCGAAVQLGSLLGALLMF) traverse the membrane as a helical segment. Over 449–469 (PLVNVLRLFSSADFCNLHCPA) the chain is Extracellular.

It belongs to the riboflavin transporter family. As to expression, predominantly expressed in testis. Highly expressed in small intestine and prostate.

Its subcellular location is the apical cell membrane. It is found in the cell membrane. The protein resides in the nucleus membrane. It localises to the cytoplasm. The catalysed reaction is riboflavin(in) = riboflavin(out). Activity is strongly inhibited by riboflavin analogs, such as lumiflavin, flavin mononucleotide (FMN), flavin adenine dinucleotide (FAD), by methylene blue, and to a lesser extent by amiloride. Riboflavin transport is Na(+)-independent at low pH but significantly reduced by Na(+) depletion under neutral pH conditions. Plasma membrane transporter mediating the uptake by cells of the water soluble vitamin B2/riboflavin that plays a key role in biochemical oxidation-reduction reactions of the carbohydrate, lipid, and amino acid metabolism. Humans are unable to synthesize vitamin B2/riboflavin and must obtain it via intestinal absorption. This chain is Solute carrier family 52, riboflavin transporter, member 3 (SLC52A3), found in Homo sapiens (Human).